A 391-amino-acid polypeptide reads, in one-letter code: Somatostatin receptor type 1 (391 aa).

The tract at residues 1-50 (MFPNGTAPSPTSSPSSSPGGCGEGVCSRGPGSGAADGMEEPGRNSSQNGT) is disordered. Over 1-56 (MFPNGTAPSPTSSPSSSPGGCGEGVCSRGPGSGAADGMEEPGRNSSQNGTLSEGQG) the chain is Extracellular. The N-linked (GlcNAc...) asparagine glycan is linked to asparagine 4. The segment covering 8–18 (PSPTSSPSSSP) has biased composition (low complexity). N-linked (GlcNAc...) asparagine glycans are attached at residues asparagine 44 and asparagine 48. Residues 57–84 (SAILISFIYSVVCLVGLCGNSMVIYVIL) traverse the membrane as a helical segment. Residues 85–94 (RYAKMKTATN) are Cytoplasmic-facing. Residues 95–120 (IYILNLAIADELLMLSVPFLVTSTLL) traverse the membrane as a helical segment. Over 121–131 (RHWPFGALLCR) the chain is Extracellular. A disulfide bridge connects residues cysteine 130 and cysteine 208. The chain crosses the membrane as a helical span at residues 132-153 (LVLSVDAVNMFTSIYCLTVLSV). Residues 154 to 175 (DRYVAVVHPIKAARYRRPTVAK) lie on the Cytoplasmic side of the membrane. The helical transmembrane segment at 176–196 (VVNLGVWVLSLLVILPIVVFS) threads the bilayer. At 197–219 (RTAANSDGTVACNMLMPEPAQRW) the chain is on the extracellular side. The helical transmembrane segment at 220 to 244 (LVGFVLYTFLMGFLLPVGAICLCYV) threads the bilayer. Over 245–270 (LIIAKMRMVALKAGWQQRKRSERKIT) the chain is Cytoplasmic. A helical transmembrane segment spans residues 271 to 296 (LMVMMVVMVFVICWMPFYVVQLVNVF). The Extracellular segment spans residues 297–303 (AEQDDAT). A helical transmembrane segment spans residues 304–327 (VSQLSVILGYANSCANPILYGFLS). The Cytoplasmic portion of the chain corresponds to 328–391 (DNFKRSFQRI…GTCASRISTL (64 aa)). Residue cysteine 339 is the site of S-palmitoyl cysteine attachment.

It belongs to the G-protein coupled receptor 1 family. Brain, pituitary, islet, jejunum, stomach, heart, spleen.

The protein localises to the cell membrane. In terms of biological role, receptor for somatostatin with higher affinity for somatostatin-14 than -28. This receptor is coupled to phosphotyrosine phosphatase and Na(+)/H(+) exchanger via pertussis toxin insensitive G proteins. This Rattus norvegicus (Rat) protein is Somatostatin receptor type 1 (Sstr1).